Here is a 310-residue protein sequence, read N- to C-terminus: Glycine-rich RNA-binding protein RZ1C (310 aa).

The RRM domain occupies 7 to 85 (SRIFVGGLSP…RVISVNRAEP (79 aa)). Ser15 is modified (phosphoserine). A disordered region spans residues 82 to 120 (RAEPKLGRDDGESHGSRGGRDSGYSIAGKGSFGGGGGGG). Over residues 83-101 (AEPKLGRDDGESHGSRGGR) the composition is skewed to basic and acidic residues. The segment covering 111–120 (GSFGGGGGGG) has biased composition (gly residues). The CCHC-type zinc-finger motif lies at 128 to 143 (CFKCGRVGHWARDCPS). The tract at residues 224–310 (RFAGGDRYSR…YPSSSTFDRY (87 aa)) is disordered. Composition is skewed to basic and acidic residues over residues 226 to 236 (AGGDRYSRGSD) and 244 to 253 (DKARSFERDI). The segment covering 261–273 (RYGGGRAGGPIRG) has biased composition (gly residues). Position 295 is a phosphoserine (Ser295).

In terms of tissue distribution, expressed in roots, rosette and cauline leaves, stems, floral buds and flowers.

The protein resides in the nucleus. Its function is as follows. Binds RNA and DNA sequences non-specifically. May be involved in tolerance to cold stress. In Arabidopsis thaliana (Mouse-ear cress), this protein is Glycine-rich RNA-binding protein RZ1C.